The chain runs to 180 residues: Cytidylate kinase 2 (180 aa).

7–15 (GKSGCGNTT) serves as a coordination point for ATP.

It belongs to the cytidylate kinase family. Type 2 subfamily.

It localises to the cytoplasm. The enzyme catalyses CMP + ATP = CDP + ADP. It catalyses the reaction dCMP + ATP = dCDP + ADP. The polypeptide is Cytidylate kinase 2 (cmk2) (Borreliella burgdorferi (strain ATCC 35210 / DSM 4680 / CIP 102532 / B31) (Borrelia burgdorferi)).